We begin with the raw amino-acid sequence, 175 residues long: MSSANQDATRGQIEAELDDPLRALGLDIEAVEITPAGKRRILRVAVDKDGGVTLDEVAEATREVNRVLDGSEVMGEQPYTLEVTSRGVDRPLTLPRHWRRNAGRLVKVAFADGRAATGRILDSNEEQVTLDVGGTRQQVAYAEVKKALVQVEFNRPTDGPGDDGDDGGDDEAGEA.

The interval E152–A175 is disordered. Positions P160–A175 are enriched in acidic residues.

The protein belongs to the RimP family.

Its subcellular location is the cytoplasm. Its function is as follows. Required for maturation of 30S ribosomal subunits. The protein is Ribosome maturation factor RimP of Nocardioides sp. (strain ATCC BAA-499 / JS614).